Reading from the N-terminus, the 185-residue chain is MINEIKSDAQTRMDKCVESTKTQMAKVRTGRAHPSLLDTIQVPYYGSLTPLKQVASVSIGDARTLTVSVFDRTMIAAVEKAIMSSDLGLNPMSAGATIRIPLPALTEERRKDLIKVVRAEAENGRIAIRNVRRDANSNVKELEKEKECTEDDVRRSEDDVQKLTDAHIKLVDDVLAAKEKELMEF.

Belongs to the RRF family.

Its subcellular location is the cytoplasm. Functionally, responsible for the release of ribosomes from messenger RNA at the termination of protein biosynthesis. May increase the efficiency of translation by recycling ribosomes from one round of translation to another. The chain is Ribosome-recycling factor from Shewanella halifaxensis (strain HAW-EB4).